The chain runs to 209 residues: Protein Bel-1 (209 aa).

Disordered regions lie at residues 1–30, 123–143, and 156–185; these read MASK…LDLT, FLNS…PATS, and CSRP…GESG. Composition is skewed to polar residues over residues 21–30 and 132–143; these read SHSTSGLDLT and TPKTDPTRPATS.

Transcriptional transactivator that activates the viral internal promoter (IP), thereby enhancing its own expression. This transactivation is repressed by nuclear factor I. Also transactivates the long terminal repeat (LTR) promoter, thereby inducing structural gene expression, initiating the late phase of infection. It is therefore a key regulator of viral gene expression. It directly binds to and activates DNA target sites of viral promoters and those of distinct cellular genes. Required for viral replication. The chain is Protein Bel-1 (bel1) from Felis catus (Cat).